Here is a 270-residue protein sequence, read N- to C-terminus: F-actin-capping protein subunit beta (270 aa).

The protein belongs to the F-actin-capping protein beta subunit family. Component of the F-actin capping complex, composed of a heterodimer of an alpha and a beta subunit.

It localises to the cytoplasm. Its subcellular location is the cytoskeleton. F-actin-capping proteins bind in a Ca(2+)-independent manner to the fast growing ends of actin filaments (barbed end) thereby blocking the exchange of subunits at these ends. Unlike other capping proteins (such as gelsolin and severin), these proteins do not sever actin filaments. The sequence is that of F-actin-capping protein subunit beta (cap-2) from Caenorhabditis elegans.